The following is a 305-amino-acid chain: Acyl transferase (305 aa).

Residues serine 114, aspartate 211, and histidine 241 each act as charge relay system in the active site.

This sequence belongs to the LuxD family.

It functions in the pathway lipid metabolism; fatty acid reduction for biolumincescence. Its function is as follows. Acyl transferase is part of the fatty acid reductase system required for aldehyde biosynthesis; it produces fatty acids for the luminescent reaction. The chain is Acyl transferase (luxD) from Vibrio harveyi (Beneckea harveyi).